Here is a 322-residue protein sequence, read N- to C-terminus: Probable cAMP-dependent protein kinase catalytic subunit (322 aa).

Residues 7 to 261 form the Protein kinase domain; it reads FEFVKVVGVG…ICEIMGHPFF (255 aa). ATP-binding positions include 13–21 and K37; that span reads VGVGAFGKV. D132 functions as the Proton acceptor in the catalytic mechanism. Residues 262 to 322 form the AGC-kinase C-terminal domain; that stretch reads KGIDWHEVES…KHLYKVSKGL (61 aa).

It belongs to the protein kinase superfamily. AGC Ser/Thr protein kinase family. cAMP subfamily.

The enzyme catalyses L-seryl-[protein] + ATP = O-phospho-L-seryl-[protein] + ADP + H(+). It catalyses the reaction L-threonyl-[protein] + ATP = O-phospho-L-threonyl-[protein] + ADP + H(+). In Encephalitozoon cuniculi (strain GB-M1) (Microsporidian parasite), this protein is Probable cAMP-dependent protein kinase catalytic subunit.